The following is a 551-amino-acid chain: Transcription factor 7-like 1-B (551 aa).

Residues 1 to 11 (MPQLNSGGGDE) are compositionally biased toward gly residues. The interval 1 to 61 (MPQLNSGGGD…SENHSSDSDS (61 aa)) is interaction with CTNNB1-A. 4 disordered regions span residues 1–77 (MPQL…EKPR), 183–213 (GTPPGHLSPEIDPKTGIPRPPHPSELSPYYP), 391–474 (WSAR…SLTT), and 492–515 (SPSSSSLSGHLPSPVGSPLLSRPI). Basic and acidic residues-rich tracts occupy residues 17-32 (ELIRFKDEGEQEEKSP) and 52-77 (SENHSSDSDSEVERRPPPRETFEKPR). The segment at 109 to 312 (LGGHYLPNGA…SPNLSTKSNV (204 aa)) is interaction with AES and TLE4-A. The HMG box DNA-binding region spans 324–392 (IKKPLNAFML…LHSQLYPSWS (69 aa)). Positions 407–416 (KQSPEMENYT) are enriched in basic and acidic residues. The interaction with CTBP-B stretch occupies residues 408 to 551 (QSPEMENYTK…PLSLVTRSSD (144 aa)). A compositionally biased stretch (low complexity) spans 445-464 (SPATPSAALASPAAPAATHS). A compositionally biased stretch (polar residues) spans 465–474 (EQAQPLSLTT).

It belongs to the TCF/LEF family. In terms of assembly, interacts with csnk1e, ctnnb1-A, ctbp-B, dact1-A and gsk3b. May interact with ase and tle4-A. Interacts with tle1-B. In terms of processing, phosphorylated. Phosphorylation by csnk1e promotes binding to ctnnb1-A while phosphorylation by gsk3b may reverse this effect.

It is found in the nucleus. In terms of biological role, participates in the Wnt signaling pathway. Binds to DNA and acts as a repressor in the absence of ctnnb1-A and possibly ctnnb1-B, and as an activator in the presence of these proteins. Required early in development for the establishment of the dorsal body axis in response to maternal Wnt signaling. The sequence is that of Transcription factor 7-like 1-B (tcf7l1-b) from Xenopus laevis (African clawed frog).